The following is a 398-amino-acid chain: MVKRVHIFDWHKEHAKKVEEFAGWEMPIWYSSIKEEHLAVRNGVGIFDVSHMGEFIFRGKDALEFLQYVTTNDISKPPAISGTYTLVLNERGAVKDETLVFNMGNDTYMMVCDSDAFEKLDAWFNAIKRGIEKFGDIDLEIENKTYDMAMFSIQGPKARDLAKELFGIDINDLWWFQAKEVELDGIKMLLSRSGYTGENGFEVYFEDANPYHPDPSKRGEPEKALHVWKTILEAGEKYGIKPAGLGARDTLRLEAGYTLYGNETKEKQLLSTDIDEVTPLQANLDFAIFWDKEFIGKEALLKQKERGLPSKMVHFKMVDKGVPREGYKVYKDGELIGEVTSGTLSPLLGIGIGIAFVKPEYAVPGVEIEVEIRGKPKKAVTVAPPFYDPKKYGAFREE.

It belongs to the GcvT family. The glycine cleavage system is composed of four proteins: P, T, L and H.

It catalyses the reaction N(6)-[(R)-S(8)-aminomethyldihydrolipoyl]-L-lysyl-[protein] + (6S)-5,6,7,8-tetrahydrofolate = N(6)-[(R)-dihydrolipoyl]-L-lysyl-[protein] + (6R)-5,10-methylene-5,6,7,8-tetrahydrofolate + NH4(+). In terms of biological role, the glycine cleavage system catalyzes the degradation of glycine. In Thermococcus kodakarensis (strain ATCC BAA-918 / JCM 12380 / KOD1) (Pyrococcus kodakaraensis (strain KOD1)), this protein is Probable aminomethyltransferase.